The chain runs to 598 residues: Chaperone protein DnaK (598 aa).

A Phosphothreonine; by autocatalysis modification is found at threonine 175. The span at 571–591 (AKSAAASSNKDDSLNNNSSSN) shows a compositional bias: low complexity. The tract at residues 571–598 (AKSAAASSNKDDSLNNNSSSNNDEETFE) is disordered.

The protein belongs to the heat shock protein 70 family.

In terms of biological role, acts as a chaperone. The sequence is that of Chaperone protein DnaK from Mycoplasmopsis agalactiae (strain NCTC 10123 / CIP 59.7 / PG2) (Mycoplasma agalactiae).